Here is a 125-residue protein sequence, read N- to C-terminus: Large ribosomal subunit protein bL12 (125 aa).

The protein belongs to the bacterial ribosomal protein bL12 family. As to quaternary structure, homodimer. Part of the ribosomal stalk of the 50S ribosomal subunit. Forms a multimeric L10(L12)X complex, where L10 forms an elongated spine to which 2 to 4 L12 dimers bind in a sequential fashion. Binds GTP-bound translation factors.

Forms part of the ribosomal stalk which helps the ribosome interact with GTP-bound translation factors. Is thus essential for accurate translation. This is Large ribosomal subunit protein bL12 from Rickettsia africae (strain ESF-5).